The sequence spans 280 residues: NAD(P)H-quinone oxidoreductase subunit K, chloroplastic (280 aa).

Residues Cys-65, Cys-66, Cys-130, and Cys-161 each contribute to the [4Fe-4S] cluster site. The segment at 257–280 is disordered; that stretch reads LLKDWKQSNQKQEQNVKMMKEEEA.

This sequence belongs to the complex I 20 kDa subunit family. In terms of assembly, NDH is composed of at least 16 different subunits, 5 of which are encoded in the nucleus. The cofactor is [4Fe-4S] cluster.

Its subcellular location is the plastid. It is found in the chloroplast thylakoid membrane. The catalysed reaction is a plastoquinone + NADH + (n+1) H(+)(in) = a plastoquinol + NAD(+) + n H(+)(out). The enzyme catalyses a plastoquinone + NADPH + (n+1) H(+)(in) = a plastoquinol + NADP(+) + n H(+)(out). Its function is as follows. NDH shuttles electrons from NAD(P)H:plastoquinone, via FMN and iron-sulfur (Fe-S) centers, to quinones in the photosynthetic chain and possibly in a chloroplast respiratory chain. The immediate electron acceptor for the enzyme in this species is believed to be plastoquinone. Couples the redox reaction to proton translocation, and thus conserves the redox energy in a proton gradient. The protein is NAD(P)H-quinone oxidoreductase subunit K, chloroplastic of Staurastrum punctulatum (Green alga).